The chain runs to 242 residues: Ribonuclease 3 (242 aa).

The region spanning 7 to 136 is the RNase III domain; it reads LEALQNLLGY…LLASIYLDGG (130 aa). Residue Glu49 coordinates Mg(2+). Asp53 is a catalytic residue. Residues Asp122 and Glu125 each coordinate Mg(2+). The active site involves Glu125. The DRBM domain occupies 167-236; it reads DYKTQLQELT…AEKALQIIAA (70 aa).

This sequence belongs to the ribonuclease III family. Homodimer. Requires Mg(2+) as cofactor.

The protein resides in the cytoplasm. It catalyses the reaction Endonucleolytic cleavage to 5'-phosphomonoester.. Its function is as follows. Digests double-stranded RNA. Involved in the processing of primary rRNA transcript to yield the immediate precursors to the large and small rRNAs (23S and 16S). Processes some mRNAs, and tRNAs when they are encoded in the rRNA operon. Processes pre-crRNA and tracrRNA of type II CRISPR loci if present in the organism. The polypeptide is Ribonuclease 3 (Syntrophobacter fumaroxidans (strain DSM 10017 / MPOB)).